The primary structure comprises 478 residues: Isoeugenol monooxygenase (478 aa).

Fe cation contacts are provided by histidine 167, histidine 218, histidine 282, and histidine 471.

Belongs to the carotenoid oxygenase family. It depends on Fe(2+) as a cofactor.

It catalyses the reaction (E)-isoeugenol + O2 = vanillin + acetaldehyde. Inhibited by Co(2+), Ni(2+) and Zn(2+), which may inhibit enzyme activity by replacing iron in the catalytic residues. Inhibited by incubation with high concentrations of the iron chelators 1,10-phenanthroline and Tiron. However, iron is not completely removed by the chelators, suggesting that iron is tightly bound to the enzyme. Functionally, involved in isoeugenol degradation. Catalyzes the oxidative cleavage of the side chain double-bond of isoeugenol to form vanillin and acetaldehyde. The polypeptide is Isoeugenol monooxygenase (Pseudomonas nitroreducens).